The following is a 405-amino-acid chain: Bone morphogenetic protein 4 (405 aa).

The signal sequence occupies residues 1-19 (MIPGNRMLMVILLCQVLLG). A propeptide spanning residues 20–291 (GTNHASLIPE…GHALTRRARR (272 aa)) is cleaved from the precursor. 4 N-linked (GlcNAc...) asparagine glycosylation sites follow: Asn-144, Asn-208, Asn-347, and Asn-362. Intrachain disulfides connect Cys-305–Cys-370, Cys-334–Cys-402, and Cys-338–Cys-404.

It belongs to the TGF-beta family. Homodimer; disulfide-linked. Part of a complex consisting of TWSG1 and CHRD. Forms a ternary complex with chordin/CHRD and TSKU.

Its subcellular location is the secreted. Negatively regulates the structure and function of the limb apical ectodermal ridge. This Gallus gallus (Chicken) protein is Bone morphogenetic protein 4 (BMP4).